The primary structure comprises 192 residues: 3-hydroxyanthranilate 3,4-dioxygenase (192 aa).

Residue Arg-50 participates in O2 binding. Fe cation contacts are provided by His-54, Glu-60, and His-102. Glu-60 lines the substrate pocket. Residues Arg-106 and Glu-116 each contribute to the substrate site. Residues Cys-131, Cys-134, Cys-168, and Cys-171 each contribute to the a divalent metal cation site.

This sequence belongs to the 3-HAO family. Fe(2+) serves as cofactor.

It localises to the cytoplasm. The enzyme catalyses 3-hydroxyanthranilate + O2 = (2Z,4Z)-2-amino-3-carboxymuconate 6-semialdehyde. Its pathway is cofactor biosynthesis; NAD(+) biosynthesis; quinolinate from L-kynurenine: step 3/3. In terms of biological role, catalyzes the oxidative ring opening of 3-hydroxyanthranilate to 2-amino-3-carboxymuconate semialdehyde, which spontaneously cyclizes to quinolinate. This is 3-hydroxyanthranilate 3,4-dioxygenase (bna1) from Neosartorya fischeri (strain ATCC 1020 / DSM 3700 / CBS 544.65 / FGSC A1164 / JCM 1740 / NRRL 181 / WB 181) (Aspergillus fischerianus).